The chain runs to 57 residues: MAGSFITVECPDCENEQSLFEKAASEVSCAVCGHTIARPTGGKADIEGEVTAVVEAR.

Zn(2+)-binding residues include cysteine 10, cysteine 13, cysteine 29, and cysteine 32. Residues 10–32 (CPDCENEQSLFEKAASEVSCAVC) form a C4-type zinc finger.

Belongs to the eukaryotic ribosomal protein eS27 family. In terms of assembly, part of the 30S ribosomal subunit. The cofactor is Zn(2+).

The sequence is that of Small ribosomal subunit protein eS27 from Haloarcula marismortui (strain ATCC 43049 / DSM 3752 / JCM 8966 / VKM B-1809) (Halobacterium marismortui).